We begin with the raw amino-acid sequence, 739 residues long: Vascular cell adhesion protein 1 (739 aa).

A signal peptide spans 1–24 (MPVKMVAIFGASTVLWILFAVSQA). 7 Ig-like C2-type domains span residues 25-111 (FKIE…IQVD), 119-212 (PEIQ…KERE), 223-309 (PKNT…LIVQ), 312-397 (PFTV…KTIQ), 408-506 (EIEI…QTLY), 514-595 (PTIW…VELI), and 601-682 (KDIQ…RSLT). At 25-698 (FKIEISPEYK…ENNKDYFSPE (674 aa)) the chain is on the extracellular side. 5 disulfides stabilise this stretch: cysteine 47-cysteine 95, cysteine 52-cysteine 99, cysteine 137-cysteine 195, cysteine 246-cysteine 291, and cysteine 335-cysteine 383. The N-linked (GlcNAc...) asparagine glycan is linked to asparagine 273. N-linked (GlcNAc...) asparagine glycosylation is found at asparagine 424, asparagine 531, asparagine 561, and asparagine 650. The cysteines at positions 534 and 579 are disulfide-linked. Residues 699–720 (LLALYFASSLVIPAIGMIIYFA) form a helical membrane-spanning segment. The Cytoplasmic portion of the chain corresponds to 721–739 (RKANMKGSYSLVEAQKSKV).

Binds to ECMV-D capsid proteins and acts as a receptor for this virus. In terms of processing, cleaved by the metalloproteinase ADAM17 to generate the soluble form. Post-translationally, sialoglycoprotein. Ubiquitinated by TRIM65 via 'Lys-48'-linked ubiquitination; leading to proteasomal degradation. As to expression, expressed in aortic endothelial cells, with low expression in the descending thoracic aorta and the outer curvature of the aortic arch, where pulsatory shear stress exists, and high in the inner curvature of the aortic arch, where oscillatory shear stress prevails (at protein level). Expressed on inflamed vascular endothelium, as well as on macrophage-like and dendritic cell types in both normal and inflamed tissue.

It is found in the cell membrane. The protein resides in the secreted. Functionally, cell adhesion glycoprotein predominantly expressed on the surface of endothelial cells that plays an important role in immune surveillance and inflammation. Acts as a major regulator of leukocyte adhesion to the endothelium through interaction with different types of integrins. During inflammatory responses, binds ligands on the surface of activated endothelial cells to initiate the activation of calcium channels and the plasma membrane-associated small GTPase RAC1 leading to leukocyte transendothelial migration. Also serves as a quality-control checkpoint for entry into bone marrow by providing a 'don't-eat-me' stamping in the context of major histocompatibility complex (MHC) class-I presentation. This chain is Vascular cell adhesion protein 1 (Vcam1), found in Rattus norvegicus (Rat).